The primary structure comprises 417 residues: Phosphoglycerate kinase (417 aa).

(2R)-3-phosphoglycerate-binding residues include Val-23, Asp-24, Phe-25, Asn-26, Gln-38, Arg-39, Ser-62, His-63, Gly-65, Arg-66, Leu-122, Arg-123, His-170, and Arg-171. Residue Gly-214 participates in ADP binding. Residue Gly-214 coordinates CDP. Ala-215 and Lys-216 together coordinate AMP. Ala-215 is an ATP binding site. Ala-215 is a binding site for Mg(2+). Asp-219 is a CDP binding site. Asp-219 is a Mg(2+) binding site. Lys-220 lines the AMP pocket. ATP is bound at residue Lys-220. Gly-238 lines the ADP pocket. Gly-238 provides a ligand contact to CDP. Gly-239 and Gly-313 together coordinate AMP. Residues Gly-239 and Gly-313 each coordinate ATP. The CDP site is built by Gly-338, Val-340, and Phe-343. Phe-343 contacts ADP. Glu-344 serves as a coordination point for AMP. ATP-binding residues include Glu-344, Asp-375, and Thr-376. A Mg(2+)-binding site is contributed by Asp-375.

Belongs to the phosphoglycerate kinase family. Monomer. The cofactor is Mg(2+).

Its subcellular location is the cytoplasm. The catalysed reaction is (2R)-3-phosphoglycerate + ATP = (2R)-3-phospho-glyceroyl phosphate + ADP. The protein operates within carbohydrate degradation; glycolysis; pyruvate from D-glyceraldehyde 3-phosphate: step 2/5. Catalyzes one of the two ATP producing reactions in the glycolytic pathway via the reversible conversion of 1,3-diphosphoglycerate to 3-phosphoglycerate. In addition to its role as a glycolytic enzyme, it seems that PGK-1 acts as a polymerase alpha cofactor protein (primer recognition protein). May play a role in sperm motility. In Gallus gallus (Chicken), this protein is Phosphoglycerate kinase (PGK).